The following is a 349-amino-acid chain: Isopentenyl-diphosphate delta-isomerase (349 aa).

6 to 7 is a substrate binding site; that stretch reads RK. FMN contacts are provided by residues 62–64, S93, and N122; that span reads AMT. Residue Q152 participates in substrate binding. Position 153 (E153) interacts with Mg(2+). Residues K184, T214, 258 to 259, and 280 to 281 contribute to the FMN site; these read GG and AG.

This sequence belongs to the IPP isomerase type 2 family. In terms of assembly, homooctamer. Dimer of tetramers. FMN serves as cofactor. It depends on NADPH as a cofactor. Requires Mg(2+) as cofactor.

Its subcellular location is the cytoplasm. It carries out the reaction isopentenyl diphosphate = dimethylallyl diphosphate. Involved in the biosynthesis of isoprenoids. Catalyzes the 1,3-allylic rearrangement of the homoallylic substrate isopentenyl (IPP) to its allylic isomer, dimethylallyl diphosphate (DMAPP). In Bacillus cereus (strain ZK / E33L), this protein is Isopentenyl-diphosphate delta-isomerase.